The primary structure comprises 688 residues: Potassium-transporting ATPase ATP-binding subunit (688 aa).

4 helical membrane-spanning segments follow: residues 37–57 (FLVYISSILTTILYAVSLVGI), 65–85 (ILGITIILWLTVLFANFAEAI), 219–239 (IALQILLISLTIIFLLVTVSL), and 262–282 (VALLVCLAPTTIGALLSSIGI). Residue Asp-313 is the 4-aspartylphosphate intermediate of the active site. Residues Asp-350, Glu-354, 383–390 (FTAKTRMS), and Lys-401 contribute to the ATP site. Mg(2+) contacts are provided by Asp-524 and Asp-528. Transmembrane regions (helical) follow at residues 594–614 (FAIIPALFIGLYPGLSALNIM), 622–642 (AIFSAIIYNALIIVALIPLAL), and 668–688 (IIVPFIAIKVIDVLITAIGIV).

Belongs to the cation transport ATPase (P-type) (TC 3.A.3) family. Type IA subfamily. In terms of assembly, the system is composed of three essential subunits: KdpA, KdpB and KdpC.

Its subcellular location is the cell membrane. The catalysed reaction is K(+)(out) + ATP + H2O = K(+)(in) + ADP + phosphate + H(+). Functionally, part of the high-affinity ATP-driven potassium transport (or Kdp) system, which catalyzes the hydrolysis of ATP coupled with the electrogenic transport of potassium into the cytoplasm. This subunit is responsible for energy coupling to the transport system and for the release of the potassium ions to the cytoplasm. The chain is Potassium-transporting ATPase ATP-binding subunit from Clostridium botulinum (strain Alaska E43 / Type E3).